A 322-amino-acid polypeptide reads, in one-letter code: MQLSNRAAAREAASRDVLAADLRCSLFASALQSYKRDSVLRPFPASYARHDCKDFEALLADTGRLPNLKELLQSSRDTDKQAWDLVSWILSSKILTIHSAKKAEFEKIQQLTGAPHTPVPTPDFLFEIEYFDPANSRFYETKGERDLIYAFHGSRLENFHSIIHNGLHCHLNKTSLFGEGTYLTSDLSLALIYSPHGHGWQHSLLGPILSCVAVCEVIDHPDVKCQIKKKDSKEIDRSRARIKHSEGGEIPPKYFVVTNNQLLRVKYLLVYSQKQPKRASSQLSWLSSHWFVIMMSLYLLLLLIVSVTNSSVFHHFWNRVKR.

Residues 1–287 (MQLSNRAAAR…RASSQLSWLS (287 aa)) lie on the Cytoplasmic side of the membrane. One can recognise a PARP alpha-helical domain in the interval 5-91 (NRAAAREAAS…AWDLVSWILS (87 aa)). The PARP catalytic domain maps to 94–279 (ILTIHSAKKA…VYSQKQPKRA (186 aa)). The NAD(+) site is built by histidine 152, tyrosine 182, and tyrosine 254. A helical transmembrane segment spans residues 288–308 (SHWFVIMMSLYLLLLLIVSVT). Residues 309–322 (NSSVFHHFWNRVKR) are Lumenal-facing.

The protein belongs to the ARTD/PARP family. Interacts with KPNB1. Auto-mono-ADP-ribosylated.

It is found in the endoplasmic reticulum membrane. It carries out the reaction L-aspartyl-[protein] + NAD(+) = 4-O-(ADP-D-ribosyl)-L-aspartyl-[protein] + nicotinamide. The enzyme catalyses L-lysyl-[protein] + NAD(+) = N(6)-(ADP-D-ribosyl)-L-lysyl-[protein] + nicotinamide + H(+). It catalyses the reaction L-glutamyl-[protein] + NAD(+) = 5-O-(ADP-D-ribosyl)-L-glutamyl-[protein] + nicotinamide. With respect to regulation, in absence of activation signal, PARP16 is autoinhibited by the PARP alpha-helical domain (also named HD region), which prevents effective NAD(+)-binding. Activity is highly stimulated by signals, which unfold the PARP alpha-helical domain, relieving autoinhibition. Intracellular mono-ADP-ribosyltransferase that plays a role in different processes, such as protein translation and unfolded protein response (UPR), through the mono-ADP-ribosylation of proteins involved in those processes. Acts as an inhibitor of protein translation by catalyzing mono-ADP-ribosylation of ribosomal subunits, such as RPL14 and RPS6, thereby inhibiting polysome assembly and mRNA loading. Mono-ADP-ribosylation of ribosomal subunits is promoted by NMNAT2. Involved in the unfolded protein response (UPR) by ADP-ribosylating and activating EIF2AK3 and ERN1, two important UPR effectors. May also mediate mono-ADP-ribosylation of karyopherin KPNB1 a nuclear import factor. May not modify proteins on arginine or cysteine residues compared to other mono-ADP-ribosyltransferases. This Mus musculus (Mouse) protein is Protein mono-ADP-ribosyltransferase PARP16.